A 519-amino-acid polypeptide reads, in one-letter code: Bifunctional purine biosynthesis protein PurH (519 aa).

The 147-residue stretch at 1–147 folds into the MGS-like domain; sequence MAKITRALIS…KNNHDVTVLV (147 aa).

This sequence belongs to the PurH family.

The enzyme catalyses (6R)-10-formyltetrahydrofolate + 5-amino-1-(5-phospho-beta-D-ribosyl)imidazole-4-carboxamide = 5-formamido-1-(5-phospho-D-ribosyl)imidazole-4-carboxamide + (6S)-5,6,7,8-tetrahydrofolate. It catalyses the reaction IMP + H2O = 5-formamido-1-(5-phospho-D-ribosyl)imidazole-4-carboxamide. Its pathway is purine metabolism; IMP biosynthesis via de novo pathway; 5-formamido-1-(5-phospho-D-ribosyl)imidazole-4-carboxamide from 5-amino-1-(5-phospho-D-ribosyl)imidazole-4-carboxamide (10-formyl THF route): step 1/1. The protein operates within purine metabolism; IMP biosynthesis via de novo pathway; IMP from 5-formamido-1-(5-phospho-D-ribosyl)imidazole-4-carboxamide: step 1/1. The polypeptide is Bifunctional purine biosynthesis protein PurH (Trichlorobacter lovleyi (strain ATCC BAA-1151 / DSM 17278 / SZ) (Geobacter lovleyi)).